We begin with the raw amino-acid sequence, 266 residues long: UPF0328 protein ECU03_0130 (266 aa).

This sequence belongs to the UPF0328 family.

This chain is UPF0328 protein ECU03_0130, found in Encephalitozoon cuniculi (strain GB-M1) (Microsporidian parasite).